Here is a 230-residue protein sequence, read N- to C-terminus: Ribosomal RNA large subunit methyltransferase E (230 aa).

5 residues coordinate S-adenosyl-L-methionine: Gly76, Trp78, Asp99, Asp115, and Asp139. Lys179 serves as the catalytic Proton acceptor.

The protein belongs to the class I-like SAM-binding methyltransferase superfamily. RNA methyltransferase RlmE family.

It is found in the cytoplasm. The catalysed reaction is uridine(2552) in 23S rRNA + S-adenosyl-L-methionine = 2'-O-methyluridine(2552) in 23S rRNA + S-adenosyl-L-homocysteine + H(+). Specifically methylates the uridine in position 2552 of 23S rRNA at the 2'-O position of the ribose in the fully assembled 50S ribosomal subunit. This is Ribosomal RNA large subunit methyltransferase E from Nitrobacter winogradskyi (strain ATCC 25391 / DSM 10237 / CIP 104748 / NCIMB 11846 / Nb-255).